Consider the following 1630-residue polypeptide: Separin (1630 aa).

A disordered region spans residues 1016 to 1037 (SKHSTGLKLCDSPRSSSMTPRG). Residues 1443 to 1542 (EDNISMILNP…SAAMKYYGKL (100 aa)) enclose the Peptidase C50 domain. Cys1531 is a catalytic residue.

May bind calcium. Interacts with PDS1. Interacts with MCD1.

Its subcellular location is the nucleus. The protein resides in the cytoplasm. It localises to the cytoskeleton. It is found in the microtubule organizing center. The protein localises to the spindle pole body. It carries out the reaction All bonds known to be hydrolyzed by this endopeptidase have arginine in P1 and an acidic residue in P4. P6 is often occupied by an acidic residue or by a hydroxy-amino-acid residue, the phosphorylation of which enhances cleavage.. Its activity is regulated as follows. It is inactivated via its interaction with PDS1, which probably covers its active site. PDS1 degradation at anaphase, liberates it and triggers MCD1 cleavage. Functionally, caspase-like protease, which plays a central role in the chromosome segregation by cleaving the MCD1/SCC1 subunit of the cohesin complex at the onset of anaphase. During most of the cell cycle, it is inactivated by securin/PDS1 protein. It also promotes anaphase spindle elongation. A component of the FEAR (CDC14 early anaphase release) network which promotes CDC14 release from the nucleolus during early anaphase. Cleaves SLK19. In Saccharomyces cerevisiae (strain ATCC 204508 / S288c) (Baker's yeast), this protein is Separin (ESP1).